A 102-amino-acid polypeptide reads, in one-letter code: Small ribosomal subunit protein uS10 (102 aa).

The protein belongs to the universal ribosomal protein uS10 family. As to quaternary structure, part of the 30S ribosomal subunit.

In terms of biological role, involved in the binding of tRNA to the ribosomes. This Leifsonia xyli subsp. xyli (strain CTCB07) protein is Small ribosomal subunit protein uS10.